A 360-amino-acid chain; its full sequence is Phospho-N-acetylmuramoyl-pentapeptide-transferase (360 aa).

Transmembrane regions (helical) follow at residues 26–46, 74–94, 97–117, 132–152, 168–188, 199–219, 236–256, 263–283, 288–308, and 338–358; these read AILG…KLIE, MGGL…GDLG, YVWV…IDDY, WKYI…YTTA, VMPQ…VGSS, GLAI…AYLS, SGEL…FLWF, VFMG…IAVL, ILLV…ILQV, and VIVR…ATLK.

This sequence belongs to the glycosyltransferase 4 family. MraY subfamily. It depends on Mg(2+) as a cofactor.

It localises to the cell inner membrane. The catalysed reaction is UDP-N-acetyl-alpha-D-muramoyl-L-alanyl-gamma-D-glutamyl-meso-2,6-diaminopimeloyl-D-alanyl-D-alanine + di-trans,octa-cis-undecaprenyl phosphate = di-trans,octa-cis-undecaprenyl diphospho-N-acetyl-alpha-D-muramoyl-L-alanyl-D-glutamyl-meso-2,6-diaminopimeloyl-D-alanyl-D-alanine + UMP. It participates in cell wall biogenesis; peptidoglycan biosynthesis. Its function is as follows. Catalyzes the initial step of the lipid cycle reactions in the biosynthesis of the cell wall peptidoglycan: transfers peptidoglycan precursor phospho-MurNAc-pentapeptide from UDP-MurNAc-pentapeptide onto the lipid carrier undecaprenyl phosphate, yielding undecaprenyl-pyrophosphoryl-MurNAc-pentapeptide, known as lipid I. The sequence is that of Phospho-N-acetylmuramoyl-pentapeptide-transferase from Shewanella sp. (strain ANA-3).